The chain runs to 272 residues: Alkaline ceramidase (272 aa).

2 consecutive transmembrane segments (helical) span residues 34 to 54 (FANT…IMLL) and 61 to 81 (VNGG…ASTY). His-83 provides a ligand contact to Zn(2+). Helical transmembrane passes span 96 to 116 (LSLV…MKWF), 124 to 144 (LTVV…LCFL), 148 to 168 (LNAI…RYEG), and 183 to 203 (ILAL…LCDF). Positions 213 and 217 each coordinate Zn(2+). Residues 214–234 (ALFHLLAGLAGYTIFIMFSMI) form a helical membrane-spanning segment. An N-linked (GlcNAc...) asparagine glycan is attached at Asn-256.

This sequence belongs to the alkaline ceramidase family. Requires Zn(2+) as cofactor.

The protein localises to the membrane. The enzyme catalyses an N-acylsphing-4-enine + H2O = sphing-4-enine + a fatty acid. In terms of biological role, hydrolyzes the sphingolipid ceramide into sphingosine and free fatty acid. In Caenorhabditis briggsae, this protein is Alkaline ceramidase.